The following is a 212-amino-acid chain: Uridine kinase (212 aa).

ATP is bound at residue 13-20 (GASASGKS).

It belongs to the uridine kinase family.

Its subcellular location is the cytoplasm. It catalyses the reaction uridine + ATP = UMP + ADP + H(+). The enzyme catalyses cytidine + ATP = CMP + ADP + H(+). The protein operates within pyrimidine metabolism; CTP biosynthesis via salvage pathway; CTP from cytidine: step 1/3. It functions in the pathway pyrimidine metabolism; UMP biosynthesis via salvage pathway; UMP from uridine: step 1/1. The sequence is that of Uridine kinase from Shewanella putrefaciens (strain CN-32 / ATCC BAA-453).